Consider the following 113-residue polypeptide: Hydrogenase maturation factor HypA (113 aa).

H2 is a Ni(2+) binding site. Zn(2+) contacts are provided by C73, C76, C89, and C92.

It belongs to the HypA/HybF family.

Involved in the maturation of [NiFe] hydrogenases. Required for nickel insertion into the metal center of the hydrogenase. This chain is Hydrogenase maturation factor HypA, found in Dechloromonas aromatica (strain RCB).